Reading from the N-terminus, the 454-residue chain is Cobyrinate a,c-diamide synthase (454 aa).

The GATase cobBQ-type domain occupies 247-442 (KIGIAMDSAF…IHAHWASNPN (196 aa)). The active-site Nucleophile is the Cys-329.

It belongs to the CobB/CbiA family. Mg(2+) is required as a cofactor.

The catalysed reaction is cob(II)yrinate + 2 L-glutamine + 2 ATP + 2 H2O = cob(II)yrinate a,c diamide + 2 L-glutamate + 2 ADP + 2 phosphate + 2 H(+). Its pathway is cofactor biosynthesis; adenosylcobalamin biosynthesis; cob(II)yrinate a,c-diamide from sirohydrochlorin (anaerobic route): step 10/10. In terms of biological role, catalyzes the ATP-dependent amidation of the two carboxylate groups at positions a and c of cobyrinate, using either L-glutamine or ammonia as the nitrogen source. The polypeptide is Cobyrinate a,c-diamide synthase (Leptospira interrogans serogroup Icterohaemorrhagiae serovar copenhageni (strain Fiocruz L1-130)).